The chain runs to 84 residues: Small ribosomal subunit protein uS17 (84 aa).

This sequence belongs to the universal ribosomal protein uS17 family. As to quaternary structure, part of the 30S ribosomal subunit.

One of the primary rRNA binding proteins, it binds specifically to the 5'-end of 16S ribosomal RNA. The protein is Small ribosomal subunit protein uS17 of Salmonella typhi.